Consider the following 210-residue polypeptide: Putative 3-methyladenine DNA glycosylase (210 aa).

The protein belongs to the DNA glycosylase MPG family.

This is Putative 3-methyladenine DNA glycosylase from Lactobacillus helveticus (strain DPC 4571).